A 426-amino-acid polypeptide reads, in one-letter code: Enolase (426 aa).

Glutamine 163 is a (2R)-2-phosphoglycerate binding site. Glutamate 205 functions as the Proton donor in the catalytic mechanism. Mg(2+) is bound by residues aspartate 242, glutamate 286, and aspartate 313. Positions 338, 367, 368, and 389 each coordinate (2R)-2-phosphoglycerate. Lysine 338 serves as the catalytic Proton acceptor.

This sequence belongs to the enolase family. Mg(2+) is required as a cofactor.

The protein localises to the cytoplasm. Its subcellular location is the secreted. It localises to the cell surface. The enzyme catalyses (2R)-2-phosphoglycerate = phosphoenolpyruvate + H2O. It functions in the pathway carbohydrate degradation; glycolysis; pyruvate from D-glyceraldehyde 3-phosphate: step 4/5. Functionally, catalyzes the reversible conversion of 2-phosphoglycerate (2-PG) into phosphoenolpyruvate (PEP). It is essential for the degradation of carbohydrates via glycolysis. The chain is Enolase from Gemmatimonas aurantiaca (strain DSM 14586 / JCM 11422 / NBRC 100505 / T-27).